Reading from the N-terminus, the 172-residue chain is Ribosome maturation factor RimM (172 aa).

One can recognise a PRC barrel domain in the interval 96–168; it reads DGEFYYHEII…RIEVELMEGL (73 aa).

This sequence belongs to the RimM family. In terms of assembly, binds ribosomal protein uS19.

Its subcellular location is the cytoplasm. Its function is as follows. An accessory protein needed during the final step in the assembly of 30S ribosomal subunit, possibly for assembly of the head region. Essential for efficient processing of 16S rRNA. May be needed both before and after RbfA during the maturation of 16S rRNA. It has affinity for free ribosomal 30S subunits but not for 70S ribosomes. The polypeptide is Ribosome maturation factor RimM (Streptococcus thermophilus (strain CNRZ 1066)).